Consider the following 302-residue polypeptide: uncharacterized protein (302 aa).

One can recognise an S4 RNA-binding domain in the interval 19 to 90 (QWLFSVLKTA…GELDILFEDN (72 aa)). Asp-138 is an active-site residue. Residues 182-205 (KGTINSPIGRDRSHPTRRRVSPGG) form a disordered region.

The protein belongs to the pseudouridine synthase RluA family.

It catalyses the reaction a uridine in RNA = a pseudouridine in RNA. This is an uncharacterized protein from Bacillus subtilis (strain 168).